Consider the following 323-residue polypeptide: Beta-ketoacyl-[acyl-carrier-protein] synthase III (323 aa).

Catalysis depends on residues Cys112 and His250. The segment at 251-255 (QANQR) is ACP-binding. The active site involves Asn280.

The protein belongs to the thiolase-like superfamily. FabH family. In terms of assembly, homodimer.

It is found in the cytoplasm. The catalysed reaction is malonyl-[ACP] + acetyl-CoA + H(+) = 3-oxobutanoyl-[ACP] + CO2 + CoA. It participates in lipid metabolism; fatty acid biosynthesis. Functionally, catalyzes the condensation reaction of fatty acid synthesis by the addition to an acyl acceptor of two carbons from malonyl-ACP. Catalyzes the first condensation reaction which initiates fatty acid synthesis and may therefore play a role in governing the total rate of fatty acid production. Possesses both acetoacetyl-ACP synthase and acetyl transacylase activities. Its substrate specificity determines the biosynthesis of branched-chain and/or straight-chain of fatty acids. This is Beta-ketoacyl-[acyl-carrier-protein] synthase III from Oenococcus oeni (strain ATCC BAA-331 / PSU-1).